A 240-amino-acid chain; its full sequence is Probable Ni/Fe-hydrogenase B-type cytochrome subunit (240 aa).

Helical transmembrane passes span 31–51 (LWHW…YFIG), 75–95 (FAAG…AFVG), 142–163 (LAMF…FALY), and 196–213 (LGMW…YLAA).

It belongs to the HupC/HyaC/HydC family.

Its subcellular location is the cell membrane. In terms of biological role, probable b-type cytochrome. The protein is Probable Ni/Fe-hydrogenase B-type cytochrome subunit (hupZ) of Azotobacter chroococcum mcd 1.